The sequence spans 72 residues: Large ribosomal subunit protein bL31 (72 aa).

Belongs to the bacterial ribosomal protein bL31 family. Type A subfamily. In terms of assembly, part of the 50S ribosomal subunit.

Functionally, binds the 23S rRNA. In Deinococcus deserti (strain DSM 17065 / CIP 109153 / LMG 22923 / VCD115), this protein is Large ribosomal subunit protein bL31.